We begin with the raw amino-acid sequence, 618 residues long: Nuclear RNA export factor 1 (618 aa).

A compositionally biased stretch (basic and acidic residues) spans 1-15 (MADEGKSYNEHDDRV). Positions 1–113 (MADEGKSYNE…RGGAGTSQDG (113 aa)) are disordered. Ala2 carries the post-translational modification N-acetylalanine. The tract at residues 2-59 (ADEGKSYNEHDDRVSFPQRRKKGRGPFRWKCGVGNRRSGRGGSGIRSSRFEEDDGDVA) is minor non-specific RNA-binding. The interval 2-117 (ADEGKSYNEH…GTSQDGTTKN (116 aa)) is RNA-binding (RBD). Residues 2-197 (ADEGKSYNEH…IIINSSAPPY (196 aa)) form an interaction with ALYREF/THOC4 and LUZP4 region. Positions 19 to 28 (QRRKKGRGPF) are enriched in basic residues. Arg41 is modified (asymmetric dimethylarginine; alternate). Arg41 bears the Omega-N-methylarginine; alternate mark. Residues 60-117 (MNDPQDGPRVRFNPYTTRPNRRRDTWHDRDRIHVTVRRDRAPQERGGAGTSQDGTTKN) form a major non-specific RNA-binding region. Positions 60–117 (MNDPQDGPRVRFNPYTTRPNRRRDTWHDRDRIHVTVRRDRAPQERGGAGTSQDGTTKN) are RNA binding. The short motif at 66-99 (GPRVRFNPYTTRPNRRRDTWHDRDRIHVTVRRDR) is the Nuclear localization signal element. The span at 81-102 (RRDTWHDRDRIHVTVRRDRAPQ) shows a compositional bias: basic and acidic residues. The short motif at 82–109 (RDTWHDRDRIHVTVRRDRAPQERGGAGT) is the Nuclear export signal element. One can recognise an RRM domain in the interval 118-197 (WFKITIPYGK…IIINSSAPPY (80 aa)). Tyr125 is modified (3'-nitrotyrosine). LRR repeat units follow at residues 265–290 (ELLS…QKAP), 291–314 (NLKI…IKGL), 315–342 (KLEE…TIRE), and 343–370 (RFPK…TMLP). Residues 385 to 535 (LVLHFLQQYY…LCIVNDELFV (151 aa)) enclose the NTF2 domain. The TAP-C domain maps to 564-618 (QEQQDMLQAFSTQSGMNLEWSQKCLQDNNWDYTRSAQAFTHLKAKGEIPEVAFMK).

The protein belongs to the NXF family. In terms of assembly, heterodimer (via NTF2 domain) with NXT1. The formation of NXF1-NXT1 heterodimers is required for the NXF1-mediated nuclear mRNA export. Forms a complex with RANBP2/NUP358, NXT1 and RANGAP1. Associates with the exon junction complex (EJC). Associates with the transcription/export (TREX) complex. Found in a mRNA complex with UPF3A and UPF3B. Found in a post-splicing complex with RBM8A, UPF1, UPF2, UPF3A, UPF3B and RNPS1. Interacts (via N-terminus) with DHX9 (via N-terminus); this interaction is direct and negatively regulates NXF1-mediated nuclear export of constitutive transport element (CTE)-containing cellular mRNAs. Interacts with FYTTD1/UIF. Interacts with EIF4A3. Interacts with NUP42. Interacts with ALYREF/THOC4. Interacts with CHTOP. Interacts with FRG1 (via N-terminus). Interacts with LUZP4. Interacts with FMR1; the interaction occurs in a mRNA-dependent and polyribosomes-independent manner in the nucleus. Interacts with CPSF6 (via N-terminus); this interaction is direct. Interacts with RBM15. Interacts with RBM15B. Interacts with MCM3AP; this interaction is not mediated by RNA. Interacts with DDX3X (via C-terminus); this interaction may be partly involved in DDX3X nuclear export and in NXF1 localization to stress granules. Interacts with PABPC1/PABP1.

It localises to the nucleus. The protein localises to the nucleoplasm. Its subcellular location is the nucleus speckle. It is found in the nuclear pore complex. The protein resides in the nucleus envelope. It localises to the cytoplasm. The protein localises to the stress granule. Functionally, involved in the nuclear export of mRNA species bearing retroviral constitutive transport elements (CTE) and in the export of mRNA from the nucleus to the cytoplasm (TAP/NFX1 pathway). The NXF1-NXT1 heterodimer is involved in the export of HSP70 mRNA in conjunction with ALYREF/THOC4 and THOC5 components of the TREX complex. ALYREF/THOC4-bound mRNA is thought to be transferred to the NXF1-NXT1 heterodimer for export. Also involved in nuclear export of m6A-containing mRNAs: interaction between SRSF3 and YTHDC1 facilitates m6A-containing mRNA-binding to both SRSF3 and NXF1, promoting mRNA nuclear export. The chain is Nuclear RNA export factor 1 (Nxf1) from Rattus norvegicus (Rat).